A 338-amino-acid chain; its full sequence is Limbic system-associated membrane protein (338 aa).

The first 28 residues, 1–28 (MVGRVQPDRKQLPLVLLRLLCLLPTGLP), serve as a signal peptide directing secretion. Ig-like C2-type domains lie at 29–122 (VRSV…PKTS), 132–214 (PKIS…VKVT), and 219–304 (PTIT…ASLV). Residues N40 and N66 are each glycosylated (N-linked (GlcNAc...) asparagine). A disulfide bond links C53 and C111. Y94 bears the Phosphotyrosine mark. Residues N136 and N148 are each glycosylated (N-linked (GlcNAc...) asparagine). Intrachain disulfides connect C153–C197 and C239–C290. Residues N279, N287, and N300 are each glycosylated (N-linked (GlcNAc...) asparagine). A lipid anchor (GPI-anchor amidated asparagine; alternate) is attached at N315. The N-linked (GlcNAc...) asparagine; alternate glycan is linked to N315. A propeptide spans 316-338 (GSISLAVPLWLLAASLFCLLSKC) (removed in mature form).

Belongs to the immunoglobulin superfamily. IgLON family. Expressed mostly by neurons comprising limbic-associated cortical and subcortical regions that function in cognition, emotion, memory, and learning.

The protein localises to the cell membrane. In terms of biological role, mediates selective neuronal growth and axon targeting. Contributes to the guidance of developing axons and remodeling of mature circuits in the limbic system. Essential for normal growth of the hippocampal mossy fiber projection. This is Limbic system-associated membrane protein (Lsamp) from Rattus norvegicus (Rat).